The primary structure comprises 74 residues: Ferredoxin-like protein in nif region (74 aa).

The 4Fe-4S ferredoxin-type domain occupies 2–30 (PFKIIASQCTSCSACEPLCPNVAISEKGG). Residues cysteine 10, cysteine 13, cysteine 16, cysteine 20, cysteine 39, cysteine 51, and cysteine 55 each contribute to the [4Fe-4S] cluster site.

The cofactor is [4Fe-4S] cluster.

The protein is Ferredoxin-like protein in nif region (frxA) of Bradyrhizobium diazoefficiens (strain JCM 10833 / BCRC 13528 / IAM 13628 / NBRC 14792 / USDA 110).